A 156-amino-acid chain; its full sequence is MPRRGPVPKRDVLPDPIYGSKLVTKLINKTMVDGKKSLAEKICYRAFDIIREKTGRDPLEVFEEAMKNVMPVLEVRPRRVGGANYQVPVEVRPERRQSLAIRWIVNYARERNGRSMEEKLAAEIMDAANGVGGAVKKKEDTHKMAEANKAFAHYRW.

This sequence belongs to the universal ribosomal protein uS7 family. Part of the 30S ribosomal subunit. Contacts proteins S9 and S11.

Functionally, one of the primary rRNA binding proteins, it binds directly to 16S rRNA where it nucleates assembly of the head domain of the 30S subunit. Is located at the subunit interface close to the decoding center, probably blocks exit of the E-site tRNA. This chain is Small ribosomal subunit protein uS7, found in Carboxydothermus hydrogenoformans (strain ATCC BAA-161 / DSM 6008 / Z-2901).